The following is a 101-amino-acid chain: Small ribosomal subunit protein uS14 (101 aa).

This sequence belongs to the universal ribosomal protein uS14 family. Part of the 30S ribosomal subunit. Contacts proteins S3 and S10.

Functionally, binds 16S rRNA, required for the assembly of 30S particles and may also be responsible for determining the conformation of the 16S rRNA at the A site. The polypeptide is Small ribosomal subunit protein uS14 (Idiomarina loihiensis (strain ATCC BAA-735 / DSM 15497 / L2-TR)).